The following is a 571-amino-acid chain: Hemagglutinin-neuraminidase (571 aa).

Residues 1-26 lie on the Intravirion side of the membrane; it reads MDRAVSRVALENEEREAKNTWRFVFR. The helical transmembrane segment at 27–47 threads the bilayer; it reads IAILLLIVITLAISAAALVYS. At 48-571 the chain is on the virion surface side; it reads MEASTPGDLV…LVEILKNDGV (524 aa). N-linked (GlcNAc...) asparagine; by host glycosylation is present at N119. Residues 124–152 are important for interaction with fusion/F protein; sequence GAPVHDPDYIGGIGKELIVDDASDVTSFY. Disulfide bonds link C172-C196, C186-C247, and C238-C251. The segment at 234 to 239 is involved in neuraminidase activity; it reads NRKSCS. N-linked (GlcNAc...) asparagine; by host glycosylation is found at N341 and N433. Intrachain disulfides connect C344-C461 and C455-C465. N-linked (GlcNAc...) asparagine; by host glycosylation is found at N481, N508, and N538.

The protein belongs to the paramyxoviruses hemagglutinin-neuraminidase family. Homotetramer; composed of disulfide-linked homodimers. Interacts with F protein trimer. Interacts with host CG-1B; this interaction inhibits viral adsorption and replication rather than internalization.

The protein resides in the virion membrane. It is found in the host cell membrane. It catalyses the reaction Hydrolysis of alpha-(2-&gt;3)-, alpha-(2-&gt;6)-, alpha-(2-&gt;8)- glycosidic linkages of terminal sialic acid residues in oligosaccharides, glycoproteins, glycolipids, colominic acid and synthetic substrates.. Mediates the viral entry into the host cell together with fusion/F protein. Attaches the virus to sialic acid-containing cell receptors and thereby initiates infection. Binding of HN protein to the receptor induces a conformational change that allows the F protein to trigger virion/cell membranes fusion. Functionally, neuraminidase activity ensures the efficient spread of the virus by dissociating the mature virions from the neuraminic acid containing glycoproteins. This Gallus gallus (Chicken) protein is Hemagglutinin-neuraminidase (HN).